A 71-amino-acid chain; its full sequence is Putative membrane protein insertion efficiency factor (71 aa).

Belongs to the UPF0161 family.

The protein localises to the cell membrane. Functionally, could be involved in insertion of integral membrane proteins into the membrane. This Acetivibrio thermocellus (strain ATCC 27405 / DSM 1237 / JCM 9322 / NBRC 103400 / NCIMB 10682 / NRRL B-4536 / VPI 7372) (Clostridium thermocellum) protein is Putative membrane protein insertion efficiency factor.